The sequence spans 490 residues: Betaine aldehyde dehydrogenase (490 aa).

The K(+) site is built by Thr-26, Ile-27, and Asp-93. Residue Gly-150–Trp-152 participates in NAD(+) binding. Lys-162 acts as the Charge relay system in catalysis. Residue Lys-176–Glu-179 participates in NAD(+) binding. Val-180 provides a ligand contact to K(+). Gly-230–Ser-233 contacts NAD(+). A K(+)-binding site is contributed by Leu-246. Residue Glu-252 is the Proton acceptor of the active site. NAD(+) is bound by residues Gly-254, Cys-286, and Glu-387. The active-site Nucleophile is the Cys-286. Cys-286 carries the post-translational modification Cysteine sulfenic acid (-SOH). K(+) contacts are provided by Lys-457 and Gly-460. The active-site Charge relay system is the Glu-464.

The protein belongs to the aldehyde dehydrogenase family. Dimer of dimers. Requires K(+) as cofactor.

It carries out the reaction betaine aldehyde + NAD(+) + H2O = glycine betaine + NADH + 2 H(+). The protein operates within amine and polyamine biosynthesis; betaine biosynthesis via choline pathway; betaine from betaine aldehyde: step 1/1. In terms of biological role, involved in the biosynthesis of the osmoprotectant glycine betaine. Catalyzes the irreversible oxidation of betaine aldehyde to the corresponding acid. In Escherichia coli O7:K1 (strain IAI39 / ExPEC), this protein is Betaine aldehyde dehydrogenase.